Consider the following 330-residue polypeptide: MSPLSAARAALRVYAVGAAVILAQLLRRCRGGFLEPVFPPRPDRVAIVTGGTDGIGYSTAKHLARLGMHVIIAGNNDSKAKQVVSKIKEETLNDKVEFLYCDLASMTSIRQFVQKFKMKKIPLHVLINNAGVMMVPQRKTRDGFEEHFGLNYLGHFLLTNLLLDTLKESGSPGHSARVVTVSSATHYVAELNMDDLQSSACYSPHAAYAQSKLALVLFTYHLQRLLAAEGSHVTANVVDPGVVNTDVYKHVFWATRLAKKLLGWLLFKTPDEGAWTSIYAAVTPELEGVGGHYLYNEKETKSLHVTYNQKLQQQLWSKSCEMTGVLDVTL.

Ile-55, Tyr-208, Lys-212, and Thr-245 together coordinate NAD(+). Tyr-208 (proton acceptor) is an active-site residue.

This sequence belongs to the short-chain dehydrogenases/reductases (SDR) family. Widely expressed. Highly expressed in the pancreas.

It is found in the lipid droplet. It localises to the secreted. It catalyses the reaction a di-trans,poly-cis-polyprenol + NAD(+) = a di-trans,poly-cis-polyprenal + NADH + H(+). The enzyme catalyses a di-trans,poly-cis-polyprenol + NADP(+) = a di-trans,poly-cis-polyprenal + NADPH + H(+). The catalysed reaction is a di-trans,poly-cis-dolichol + NADP(+) = a di-trans,poly-cis-dolichal + NADPH + H(+). It carries out the reaction a di-trans,poly-cis-dolichol + NAD(+) = a di-trans,poly-cis-dolichal + NADH + H(+). The protein operates within protein modification; protein glycosylation. Functionally, oxidoreductase that plays a key role in early steps of protein N-linked glycosylation by mediating two non-consecutive steps in dolichol biosynthesis. Acts both as a NAD(+)-dependent dehydrogenase and as a NADPH-dependent reductase during the conversion of polyprenol into dolichol. First catalyzes the NAD(+)-dependent dehydrogenation of polyprenol into polyprenal; polyprenal is then reduced into dolichal by SRD5A3. It then catalyzes the NADPH-dependent reduction of dolichal into dolichol. May also acts as a positive regulator of starvation-induced autophagy. This chain is Polyprenol dehydrogenase, found in Homo sapiens (Human).